Here is a 406-residue protein sequence, read N- to C-terminus: MRRGGPSVLGIVLAGGEGKRLMPLTADRAKPAVTFGGTYRLVDFVLSNLVNADILRICVLTQYKSHSLDRHITTTWRMSSLLGNYITPVPAQQRLGPRWYLGSADAILQSLNLVYDERPEYIAVFGADHVYRMDPRQMLGEHIESGAGVTVAGIRVPRAESSSFGVIAPGSDGQTVENFLEKPADPPGLPGDPECVFASMGNYVFTTKVLIEALQRDAEDGDSVHDMGGSILPALTDRGEARLYDFSANHVPGETTRDQGYWRDVGTLDAYYDAHMDLIAERPAFNLFNRSWPIYTHSGQLSPARFNAGGIASESIISAGCLIRGQVTRSVLSPGVVVDPGAVVQGSVLHDNVHVGRGAVVRGAVLDKNVEVPPGATIGVNPGRDADLYTVSKGGVIGLGKGQRVS.

Alpha-D-glucose 1-phosphate contacts are provided by residues tyrosine 100, glycine 165, 181–182 (EK), and serine 199.

It belongs to the bacterial/plant glucose-1-phosphate adenylyltransferase family. In terms of assembly, homotetramer.

The enzyme catalyses alpha-D-glucose 1-phosphate + ATP + H(+) = ADP-alpha-D-glucose + diphosphate. The protein operates within glycan biosynthesis; glycogen biosynthesis. Involved in the biosynthesis of ADP-glucose, a building block required for the elongation reactions to produce glycogen. Catalyzes the reaction between ATP and alpha-D-glucose 1-phosphate (G1P) to produce pyrophosphate and ADP-Glc. This chain is Glucose-1-phosphate adenylyltransferase, found in Streptomyces avermitilis (strain ATCC 31267 / DSM 46492 / JCM 5070 / NBRC 14893 / NCIMB 12804 / NRRL 8165 / MA-4680).